Consider the following 55-residue polypeptide: Large ribosomal subunit protein bL33A (55 aa).

The protein belongs to the bacterial ribosomal protein bL33 family.

The polypeptide is Large ribosomal subunit protein bL33A (Mycobacterium ulcerans (strain Agy99)).